Reading from the N-terminus, the 288-residue chain is MFEPVPDLNLEASVELGEVNIDQTTPMIKENSGFISRSRRLFAHRSKDDERKLALRFFLQRLYFLDHREIHYLFRCVDAVKDVTITKKNNIIVAPYIALLTIASKGCKLTETMIEAFFPELYNEHSKKFKFNSQVSIIQEKLGYQFGNYHVYDFEPYYSTVALAIRDEHSSGIFNIRQESYLVSSLSEITYRFYLINLKSDLVQWSASTGAVINQMVNTVLITVYEKLQLVIENDSQFTCSLAVESKLPIKLLKDRNELFTKFINELKKTSSFKISKRDKDTLLKYFT.

This sequence belongs to the orthopoxvirus OPG134 family. As to quaternary structure, heterodimer of a 45 kDa (A23R) and a 32 kDa (A8R) subunit to form the virus intermediate transcription factor (VITF)-3.

Acts with RNA polymerase to initiate transcription from intermediate gene promoters. This chain is Intermediate transcription factor 3 small subunit (OPG134), found in Homo sapiens (Human).